The primary structure comprises 245 residues: 1-(5-phosphoribosyl)-5-[(5-phosphoribosylamino)methylideneamino] imidazole-4-carboxamide isomerase (245 aa).

Aspartate 8 serves as the catalytic Proton acceptor. Residue aspartate 130 is the Proton donor of the active site.

The protein belongs to the HisA/HisF family.

The protein resides in the cytoplasm. The catalysed reaction is 1-(5-phospho-beta-D-ribosyl)-5-[(5-phospho-beta-D-ribosylamino)methylideneamino]imidazole-4-carboxamide = 5-[(5-phospho-1-deoxy-D-ribulos-1-ylimino)methylamino]-1-(5-phospho-beta-D-ribosyl)imidazole-4-carboxamide. The protein operates within amino-acid biosynthesis; L-histidine biosynthesis; L-histidine from 5-phospho-alpha-D-ribose 1-diphosphate: step 4/9. The sequence is that of 1-(5-phosphoribosyl)-5-[(5-phosphoribosylamino)methylideneamino] imidazole-4-carboxamide isomerase from Pseudomonas aeruginosa (strain LESB58).